Here is a 404-residue protein sequence, read N- to C-terminus: MGPVLRWITAGESHGRALVAVLEGMVAGVEITSTDISEQLARRRLGYGRGARMSFERDAVSVLSGVRHGLTLGGPIAVEIGNTEWPKWETVMATDPVDPAQLADSARNAPLTRPRPGHADYAGMLKYGFDDARPVLERASARETAARVAAGTIARSFLRQALGVEVLSHVIAIGPSAPYEGPPPGPGDLPAIDASPVRAYDEAAEQAMIAEIEAAKKDGDTLGGVVEVVALGLPVGLGSFTSGDNRLDGQLAAAVMGIQAIKGVEIGDGFATARRRGSQAHDEMYPGPDGVVRSTNRAGGLEGGMTNGQPLRVRAAMKPISTVPRALATVDMATGDEAVAIHQRSDVCAVPAAGVVVEAMVALVLARATLQKFGGDSLAETRRNIDAYRRAVAEREAPAARGTA.

NADP(+) contacts are provided by Arg-43 and Arg-49. FMN is bound by residues Arg-138 to Ser-140, Gln-259 to Ala-260, Gly-303, Lys-318 to Thr-322, and Arg-344.

This sequence belongs to the chorismate synthase family. Homotetramer. Requires FMNH2 as cofactor.

The enzyme catalyses 5-O-(1-carboxyvinyl)-3-phosphoshikimate = chorismate + phosphate. It functions in the pathway metabolic intermediate biosynthesis; chorismate biosynthesis; chorismate from D-erythrose 4-phosphate and phosphoenolpyruvate: step 7/7. Catalyzes the anti-1,4-elimination of the C-3 phosphate and the C-6 proR hydrogen from 5-enolpyruvylshikimate-3-phosphate (EPSP) to yield chorismate, which is the branch point compound that serves as the starting substrate for the three terminal pathways of aromatic amino acid biosynthesis. This reaction introduces a second double bond into the aromatic ring system. This chain is Chorismate synthase, found in Mycolicibacterium paratuberculosis (strain ATCC BAA-968 / K-10) (Mycobacterium paratuberculosis).